Here is a 456-residue protein sequence, read N- to C-terminus: tRNA modification GTPase MnmE (456 aa).

(6S)-5-formyl-5,6,7,8-tetrahydrofolate-binding residues include R24, E81, and K120. A TrmE-type G domain is found at 216–379 (GMTVVIAGRP…LREHLKACMG (164 aa)). Residue N226 coordinates K(+). GTP contacts are provided by residues 226–231 (NAGKSS), 245–251 (TEIAGTT), 270–273 (DTAG), 335–338 (NKAD), and 359–361 (SAR). A Mg(2+)-binding site is contributed by S230. Residues T245, I247, and T250 each contribute to the K(+) site. Residue T251 participates in Mg(2+) binding. Residue K456 participates in (6S)-5-formyl-5,6,7,8-tetrahydrofolate binding.

Belongs to the TRAFAC class TrmE-Era-EngA-EngB-Septin-like GTPase superfamily. TrmE GTPase family. As to quaternary structure, homodimer. Heterotetramer of two MnmE and two MnmG subunits. K(+) is required as a cofactor.

It is found in the cytoplasm. Its function is as follows. Exhibits a very high intrinsic GTPase hydrolysis rate. Involved in the addition of a carboxymethylaminomethyl (cmnm) group at the wobble position (U34) of certain tRNAs, forming tRNA-cmnm(5)s(2)U34. The protein is tRNA modification GTPase MnmE of Pseudomonas syringae pv. syringae (strain B728a).